The chain runs to 388 residues: 3-dehydroquinate synthase (388 aa).

Residues 85-90 (DGEQYK), 119-123 (GVIGD), 143-144 (TT), Lys-156, Lys-165, and 183-186 (TLKT) contribute to the NAD(+) site. The Zn(2+) site is built by Glu-198, His-261, and His-278.

Belongs to the sugar phosphate cyclases superfamily. Dehydroquinate synthase family. It depends on Co(2+) as a cofactor. Requires Zn(2+) as cofactor. NAD(+) serves as cofactor.

It is found in the cytoplasm. It carries out the reaction 7-phospho-2-dehydro-3-deoxy-D-arabino-heptonate = 3-dehydroquinate + phosphate. It participates in metabolic intermediate biosynthesis; chorismate biosynthesis; chorismate from D-erythrose 4-phosphate and phosphoenolpyruvate: step 2/7. Its function is as follows. Catalyzes the conversion of 3-deoxy-D-arabino-heptulosonate 7-phosphate (DAHP) to dehydroquinate (DHQ). This Psychrobacter arcticus (strain DSM 17307 / VKM B-2377 / 273-4) protein is 3-dehydroquinate synthase.